Reading from the N-terminus, the 134-residue chain is Small ribosomal subunit protein uS8c (134 aa).

Belongs to the universal ribosomal protein uS8 family. As to quaternary structure, part of the 30S ribosomal subunit.

The protein localises to the plastid. The protein resides in the chloroplast. In terms of biological role, one of the primary rRNA binding proteins, it binds directly to 16S rRNA central domain where it helps coordinate assembly of the platform of the 30S subunit. The sequence is that of Small ribosomal subunit protein uS8c (rps8) from Draba nemorosa (Woodland whitlowgrass).